The following is a 240-amino-acid chain: uncharacterized protein (240 aa).

Residues 2 to 223 form the ABC transporter domain; it reads VRIQDLSLAF…GNAPRELHQA (222 aa). Residue 34–41 coordinates ATP; the sequence is GSSGVGKS.

The protein belongs to the ABC transporter superfamily.

This is an uncharacterized protein from Haemophilus influenzae (strain ATCC 51907 / DSM 11121 / KW20 / Rd).